Here is a 320-residue protein sequence, read N- to C-terminus: Zygote arrest protein 1 (320 aa).

2 disordered regions span residues 106-130 (ELRR…EVRY) and 155-208 (DRPA…AEGS). The 3CxxC-type zinc-finger motif lies at 222–305 (KYGYYHCREC…RQDLCGRCKG (84 aa)).

It belongs to the ZAR1 family.

Its subcellular location is the cytoplasm. It is found in the cytoplasmic ribonucleoprotein granule. Its function is as follows. mRNA-binding protein required for maternal mRNA storage, translation and degradation during oocyte maturation. Probably promotes formation of some phase-separated membraneless compartment that stores maternal mRNAs in oocytes: acts by undergoing liquid-liquid phase separation upon binding to maternal mRNAs. Binds to the 3'-UTR of maternal mRNAs, inhibiting their translation. This Takifugu rubripes (Japanese pufferfish) protein is Zygote arrest protein 1.